The sequence spans 71 residues: UPF0346 protein SPG_0874 (71 aa).

Belongs to the UPF0346 family.

The chain is UPF0346 protein SPG_0874 from Streptococcus pneumoniae serotype 19F (strain G54).